The primary structure comprises 317 residues: Protoheme IX farnesyltransferase (317 aa).

A run of 8 helical transmembrane segments spans residues 25 to 45, 54 to 74, 126 to 146, 154 to 174, 181 to 201, 227 to 244, 249 to 271, and 281 to 301; these read FFAL…LVGM, PVIA…SGCL, LAAG…SMWL, IVIG…VVTG, LVLF…LALV, IVAY…PVAL, LIYG…QVYH, and AAMG…SALL.

This sequence belongs to the UbiA prenyltransferase family. Protoheme IX farnesyltransferase subfamily.

Its subcellular location is the cell inner membrane. It carries out the reaction heme b + (2E,6E)-farnesyl diphosphate + H2O = Fe(II)-heme o + diphosphate. It functions in the pathway porphyrin-containing compound metabolism; heme O biosynthesis; heme O from protoheme: step 1/1. Functionally, converts heme B (protoheme IX) to heme O by substitution of the vinyl group on carbon 2 of heme B porphyrin ring with a hydroxyethyl farnesyl side group. This chain is Protoheme IX farnesyltransferase, found in Methylobacterium sp. (strain 4-46).